A 686-amino-acid polypeptide reads, in one-letter code: Translation initiation factor IF-2 (686 aa).

Residues 54 to 105 (KPSVADEFEVEEKVVRSKKNSNKKKKKGKGNEDKRQENFAGRQQTQTVETPD) form a disordered region. Residues 69–81 (RSKKNSNKKKKKG) are compositionally biased toward basic residues. The tr-type G domain occupies 188–357 (ERPAVVTIMG…LLVSEVEEYK (170 aa)). Residues 197–204 (GHVDHGKT) form a G1 region. GTP is bound at residue 197 to 204 (GHVDHGKT). A G2 region spans residues 222–226 (GITQH). Residues 243 to 246 (DTPG) form a G3 region. Residues 243–247 (DTPGH) and 297–300 (NKMD) contribute to the GTP site. The tract at residues 297–300 (NKMD) is G4. A G5 region spans residues 333–335 (SAI).

The protein belongs to the TRAFAC class translation factor GTPase superfamily. Classic translation factor GTPase family. IF-2 subfamily.

It is found in the cytoplasm. Functionally, one of the essential components for the initiation of protein synthesis. Protects formylmethionyl-tRNA from spontaneous hydrolysis and promotes its binding to the 30S ribosomal subunits. Also involved in the hydrolysis of GTP during the formation of the 70S ribosomal complex. In Bacillus cereus (strain AH187), this protein is Translation initiation factor IF-2.